We begin with the raw amino-acid sequence, 566 residues long: 3-oxosteroid 1-dehydrogenase (566 aa).

10-39 lines the FAD pocket; that stretch reads DVVVVGSGAAGMVAALVAAHRGLSTVVVEK.

The protein belongs to the FAD-dependent oxidoreductase 2 family. 3-oxosteroid dehydrogenase subfamily. It depends on FAD as a cofactor.

It catalyses the reaction a 3-oxosteroid + A = a 3-oxo-Delta(1)-steroid + AH2. It carries out the reaction a 3-oxo-Delta(4)-steroid + A = a 3-oxo-Delta(1,4)-steroid + AH2. Functionally, involved in the degradation of cholesterol. Catalyzes the elimination of the C-1 and C-2 hydrogen atoms of the A-ring from the polycyclic ring structure of 3-ketosteroids. Is also involved in the formation of 3-keto-1,4-diene-steroid from 3-keto-4-ene-steroid. The chain is 3-oxosteroid 1-dehydrogenase (kstD) from Mycobacterium tuberculosis (strain CDC 1551 / Oshkosh).